The following is a 141-amino-acid chain: Hemoglobin subunit alpha (141 aa).

The 141-residue stretch at 1-141 folds into the Globin domain; it reads VLSSADKNNV…VSTVLTSKYR (141 aa). Phosphoserine is present on Ser-3. N6-succinyllysine occurs at positions 7 and 11. The residue at position 16 (Lys-16) is an N6-acetyllysine; alternate. Lys-16 bears the N6-succinyllysine; alternate mark. Tyr-24 carries the post-translational modification Phosphotyrosine. Ser-35 carries the post-translational modification Phosphoserine. Lys-40 bears the N6-succinyllysine mark. A Phosphoserine modification is found at Ser-49. His-58 contacts O2. Heme b is bound at residue His-87. A Phosphoserine modification is found at Ser-102. The residue at position 108 (Thr-108) is a Phosphothreonine. A Phosphoserine modification is found at Ser-124. Phosphothreonine is present on residues Thr-134 and Thr-137. Residue Ser-138 is modified to Phosphoserine.

Belongs to the globin family. In terms of assembly, heterotetramer of two alpha chains and two beta chains. Red blood cells.

Functionally, involved in oxygen transport from the lung to the various peripheral tissues. In terms of biological role, hemopressin acts as an antagonist peptide of the cannabinoid receptor CNR1. Hemopressin-binding efficiently blocks cannabinoid receptor CNR1 and subsequent signaling. The chain is Hemoglobin subunit alpha (HBA) from Panthera pardus saxicolor (Northern Persian leopard).